The sequence spans 270 residues: 4-hydroxy-tetrahydrodipicolinate reductase (270 aa).

Residues 8–13 (GALGRM), aspartate 34, 102–104 (GTT), and 128–131 (SQNY) contribute to the NAD(+) site. Histidine 160 acts as the Proton donor/acceptor in catalysis. Residue histidine 161 participates in (S)-2,3,4,5-tetrahydrodipicolinate binding. Lysine 164 (proton donor) is an active-site residue. 170 to 171 (GT) contacts (S)-2,3,4,5-tetrahydrodipicolinate.

Belongs to the DapB family.

The protein resides in the cytoplasm. The enzyme catalyses (S)-2,3,4,5-tetrahydrodipicolinate + NAD(+) + H2O = (2S,4S)-4-hydroxy-2,3,4,5-tetrahydrodipicolinate + NADH + H(+). The catalysed reaction is (S)-2,3,4,5-tetrahydrodipicolinate + NADP(+) + H2O = (2S,4S)-4-hydroxy-2,3,4,5-tetrahydrodipicolinate + NADPH + H(+). The protein operates within amino-acid biosynthesis; L-lysine biosynthesis via DAP pathway; (S)-tetrahydrodipicolinate from L-aspartate: step 4/4. Its function is as follows. Catalyzes the conversion of 4-hydroxy-tetrahydrodipicolinate (HTPA) to tetrahydrodipicolinate. The sequence is that of 4-hydroxy-tetrahydrodipicolinate reductase from Methanococcus maripaludis (strain DSM 14266 / JCM 13030 / NBRC 101832 / S2 / LL).